A 261-amino-acid chain; its full sequence is Arcelin-5A (261 aa).

The N-terminal stretch at 1 to 21 is a signal peptide; sequence MASSKLLSLALFLVLLTHANS. Residues Asn43, Asn91, and Asn100 are each glycosylated (N-linked (GlcNAc...) asparagine). Cys167 and Cys203 form a disulfide bridge. A propeptide spanning residues 255-261 is cleaved from the precursor; it reads ILLNNIL.

The protein belongs to the leguminous lectin family. In terms of assembly, monomer. In terms of processing, the C-terminal segment appears to be highly susceptible to proteolysis.

Seed storage. This carbohydrate-binding lectin has toxic effects on bean bruchid pests. This chain is Arcelin-5A (ARC5A), found in Phaseolus vulgaris (Kidney bean).